Consider the following 727-residue polypeptide: Beta-galactosidase 2 (727 aa).

An N-terminal signal peptide occupies residues 1-27; it reads MSMHFRNKAWIILAILCFSSLIHSTEA. The active-site Proton donor is the glutamate 185. Glutamate 254 acts as the Nucleophile in catalysis. Asparagine 255 is a glycosylation site (N-linked (GlcNAc...) asparagine).

Belongs to the glycosyl hydrolase 35 family. In terms of tissue distribution, ubiquitous, with higher expression levels in roots and siliques.

The protein localises to the secreted. The protein resides in the extracellular space. Its subcellular location is the apoplast. It catalyses the reaction Hydrolysis of terminal non-reducing beta-D-galactose residues in beta-D-galactosides.. The chain is Beta-galactosidase 2 (BGAL2) from Arabidopsis thaliana (Mouse-ear cress).